A 400-amino-acid polypeptide reads, in one-letter code: MTSYSYRQSSATSSFGGLGGGSVRFGPGVAFRAPSIHGGSGGRGVSVSSARFVSSSSSGAYGGGYGGVLTASDGLLAGNEKLTMQNLNDRLASYLDKVRALEAANGELEVKIRDWYQKQGPGPSRDYSHYYTTIQDLRDKILGATIENSRIVLQIDNARLAADDFRTKFETEQALRMSVEADINGLRRVLDELTLARTDLEMQIEGLKEELAYLKKNHEEEISTLRGQVGGQVSVEVDSAPGTDLAKILSDMRSQYEVMAEQNRKDAEAWFTSRTEELNREVAGHTEQLQMSRSEVTDLRRTLQGLEIELQSQLSMKAALEDTLAETEARFGAQLAHIQALISGIEAQLGDVRADSERQNQEYQRLMDIKSRLEQEIATYRSLLEGQEDHYNNLSASKVL.

Residues 1–79 (MTSYSYRQSS…TASDGLLAGN (79 aa)) are head. The residue at position 7 (arginine 7) is an Omega-N-methylarginine. Serine 14 and serine 22 each carry phosphoserine. An Asymmetric dimethylarginine; alternate modification is found at arginine 24. Arginine 24 is modified (omega-N-methylarginine; alternate). Arginine 32 is modified (omega-N-methylarginine). Residues serine 35 and serine 40 each carry the phosphoserine modification. Arginine 43 and arginine 51 each carry omega-N-methylarginine. Residues serine 57 and serine 72 each carry the phosphoserine modification. Residues 80–115 (EKLTMQNLNDRLASYLDKVRALEAANGELEVKIRDW) are coil 1A. The region spanning 80–391 (EKLTMQNLND…SLLEGQEDHY (312 aa)) is the IF rod domain. A linker 1 region spans residues 116 to 133 (YQKQGPGPSRDYSHYYTT). Residues 134–225 (IQDLRDKILG…KNHEEEISTL (92 aa)) are coil 1B. Residues 226-248 (RGQVGGQVSVEVDSAPGTDLAKI) form a linker 12 region. The interval 244-390 (DLAKILSDMR…RSLLEGQEDH (147 aa)) is necessary for interaction with PNN. The tract at residues 249–387 (LSDMRSQYEV…ATYRSLLEGQ (139 aa)) is coil 2. A Phosphothreonine modification is found at threonine 323. The segment at 388–400 (EDHYNNLSASKVL) is rod-like helical tail. Phosphotyrosine is present on tyrosine 391. Phosphoserine is present on residues serine 395 and serine 397.

Belongs to the intermediate filament family. As to quaternary structure, heterotetramer of two type I and two type II keratins. Interacts with PNN and the actin-binding domain of DMD. Interacts with HCV core protein. (Microbial infection) Interacts with hepatitis C virus/HCV core protein. Expressed in a defined zone of basal keratinocytes in the deep outer root sheath of hair follicles. Also observed in sweat gland and mammary gland ductal and secretory cells, bile ducts, gastrointestinal tract, bladder urothelium, oral epithelia, esophagus, ectocervical epithelium (at protein level). Expressed in epidermal basal cells, in nipple epidermis and a defined region of the hair follicle. Also seen in a subset of vascular wall cells in both the veins and artery of human umbilical cord, and in umbilical cord vascular smooth muscle. Observed in muscle fibers accumulating in the costameres of myoplasm at the sarcolemma in structures that contain dystrophin and spectrin.

Functionally, involved in the organization of myofibers. Together with KRT8, helps to link the contractile apparatus to dystrophin at the costameres of striated muscle. The polypeptide is Keratin, type I cytoskeletal 19 (KRT19) (Homo sapiens (Human)).